A 286-amino-acid polypeptide reads, in one-letter code: Gap junction alpha-6 protein (286 aa).

Topologically, residues methionine 1–lysine 23 are cytoplasmic. A helical transmembrane segment spans residues valine 24–isoleucine 41. The Extracellular segment spans residues glutamate 42–arginine 76. A helical membrane pass occupies residues leucine 77–valine 99. At isoleucine 100–arginine 151 the chain is on the cytoplasmic side. The chain crosses the membrane as a helical span at residues leucine 152 to glutamine 174. The Extracellular portion of the chain corresponds to tryptophan 175–isoleucine 209. Residues phenylalanine 210–valine 232 form a helical membrane-spanning segment. Over leucine 233 to methionine 286 the chain is Cytoplasmic.

It belongs to the connexin family. Alpha-type (group II) subfamily. As to quaternary structure, a connexon is composed of a hexamer of connexins. As to expression, expressed in testis.

It is found in the cell membrane. It localises to the cell junction. Its subcellular location is the gap junction. In terms of biological role, one gap junction consists of a cluster of closely packed pairs of transmembrane channels, the connexons, through which materials of low MW diffuse from one cell to a neighboring cell. The chain is Gap junction alpha-6 protein (Gja6) from Rattus norvegicus (Rat).